A 182-amino-acid polypeptide reads, in one-letter code: UPF0397 protein BT9727_2423 (182 aa).

5 consecutive transmembrane segments (helical) span residues Val9–Ile29, Ala40–Ile60, Trp71–Ile91, Ile114–Val134, and Ile142–Leu162.

This sequence belongs to the UPF0397 family.

Its subcellular location is the cell membrane. In Bacillus thuringiensis subsp. konkukian (strain 97-27), this protein is UPF0397 protein BT9727_2423.